The following is a 131-amino-acid chain: NADH dehydrogenase [ubiquinone] 1 alpha subcomplex subunit 6 (131 aa).

It belongs to the complex I LYR family. In terms of assembly, mammalian complex I is composed of 45 different subunits.

It localises to the mitochondrion inner membrane. Functionally, accessory subunit of the mitochondrial membrane respiratory chain NADH dehydrogenase (Complex I), that is believed to be not involved in catalysis. Required for proper complex I assembly. Complex I functions in the transfer of electrons from NADH to the respiratory chain. The immediate electron acceptor for the enzyme is believed to be ubiquinone. In Mus musculus (Mouse), this protein is NADH dehydrogenase [ubiquinone] 1 alpha subcomplex subunit 6.